We begin with the raw amino-acid sequence, 211 residues long: Dihydrofolate reductase (211 aa).

The 204-residue stretch at 7 to 210 (PIVGIVACLQ…YCFEFTLYNR (204 aa)) folds into the DHFR domain. NADP(+)-binding positions include A13 and 20-26 (GIGFRGG). 34-39 (EMKYFR) contacts substrate. 58-60 (RKT) is an NADP(+) binding site. R74 is a substrate binding site. Residues 80 to 82 (SRS) and 123 to 130 (GGGEVYSQ) contribute to the NADP(+) site.

Belongs to the dihydrofolate reductase family.

It carries out the reaction (6S)-5,6,7,8-tetrahydrofolate + NADP(+) = 7,8-dihydrofolate + NADPH + H(+). Its pathway is cofactor biosynthesis; tetrahydrofolate biosynthesis; 5,6,7,8-tetrahydrofolate from 7,8-dihydrofolate: step 1/1. Its function is as follows. Key enzyme in folate metabolism. Catalyzes an essential reaction for de novo glycine and purine synthesis, and for DNA precursor synthesis. This Saccharomyces cerevisiae (strain ATCC 204508 / S288c) (Baker's yeast) protein is Dihydrofolate reductase (DFR1).